Reading from the N-terminus, the 429-residue chain is Gamma-glutamyl phosphate reductase (429 aa).

This sequence belongs to the gamma-glutamyl phosphate reductase family.

The protein resides in the cytoplasm. It catalyses the reaction L-glutamate 5-semialdehyde + phosphate + NADP(+) = L-glutamyl 5-phosphate + NADPH + H(+). It participates in amino-acid biosynthesis; L-proline biosynthesis; L-glutamate 5-semialdehyde from L-glutamate: step 2/2. Its function is as follows. Catalyzes the NADPH-dependent reduction of L-glutamate 5-phosphate into L-glutamate 5-semialdehyde and phosphate. The product spontaneously undergoes cyclization to form 1-pyrroline-5-carboxylate. The chain is Gamma-glutamyl phosphate reductase from Bradyrhizobium sp. (strain ORS 278).